The primary structure comprises 92 residues: PqqA binding protein (92 aa).

Belongs to the PqqD family. As to quaternary structure, monomer. Interacts with PqqE.

It participates in cofactor biosynthesis; pyrroloquinoline quinone biosynthesis. Functions as a PqqA binding protein and presents PqqA to PqqE, in the pyrroloquinoline quinone (PQQ) biosynthetic pathway. In Azotobacter vinelandii (strain DJ / ATCC BAA-1303), this protein is PqqA binding protein.